Here is a 397-residue protein sequence, read N- to C-terminus: RNA polymerase II elongation factor ELL3 (397 aa).

2 disordered regions span residues 164–219 (VSDP…KRSV) and 237–284 (VPSP…PEDI). A compositionally biased stretch (polar residues) spans 168 to 178 (LASNQGQSLPG). Residues 250–262 (QEGEDWEQEDEDM) are compositionally biased toward acidic residues. Low complexity predominate over residues 269-281 (SSSVQEDSESPSP). The region spanning 285–395 (PDYLLQYRAI…LILEFEEKNR (111 aa)) is the OCEL domain.

This sequence belongs to the ELL/occludin family. Interacts with AFF4. Component of the super elongation complex (SEC), at least composed of EAF1, EAF2, CDK9, MLLT3/AF9, AFF (AFF1 or AFF4), the P-TEFb complex and ELL (ELL, ELL2 or ELL3). Component of the little elongation complex (LEC), at least composed of ELL (ELL, ELL2 or ELL3), ZC3H8, ICE1 and ICE2. Testis specific.

It is found in the nucleus. Enhancer-binding elongation factor that specifically binds enhancers in embryonic stem cells (ES cells), marks them, and is required for their future activation during stem cell specification. Does not only bind to enhancer regions of active genes, but also marks the enhancers that are in a poised or inactive state in ES cells and is required for establishing proper RNA polymerase II occupancy at developmentally regulated genes in a cohesin-dependent manner. Probably required for priming developmentally regulated genes for later recruitment of the super elongation complex (SEC), for transcriptional activation during differentiation. Required for recruitment of P-TEFb within SEC during differentiation. Probably preloaded on germ cell chromatin, suggesting that it may prime gene activation by marking enhancers as early as in the germ cells. Promoting epithelial-mesenchymal transition (EMT). Elongation factor component of the super elongation complex (SEC), a complex required to increase the catalytic rate of RNA polymerase II transcription by suppressing transient pausing by the polymerase at multiple sites along the DNA. Component of the little elongation complex (LEC), a complex required to regulate small nuclear RNA (snRNA) gene transcription by RNA polymerase II and III. This chain is RNA polymerase II elongation factor ELL3 (ELL3), found in Homo sapiens (Human).